We begin with the raw amino-acid sequence, 224 residues long: MECSFGITGKDYVILASDMGAGRSIVRMKSDENKLKTLGPHLAMAFSGEPGDTNNFAEYIERNMRLYNIRNHFPLLPPAASAWVRRTLAEAIRSRHPYAVNLLLGGFDTTTSKPHLYWIDYLGTKAIVPYAAHGMGVYVSLSTMDKWWYEDMDKKEGVDLLRKCIDETEKRLTIKFDFNCILIDKNGIHKVDLSQADPIANIQEHPQETEVEAPHPPIEVGISA.

Belongs to the peptidase T1B family. In terms of assembly, the 26S proteasome consists of a 20S proteasome core and two 19S regulatory subunits. The 20S proteasome core is composed of 28 subunits that are arranged in four stacked rings, resulting in a barrel-shaped structure. The two end rings are each formed by seven alpha subunits, and the two central rings are each formed by seven beta subunits. The catalytic chamber with the active sites is on the inside of the barrel.

It is found in the cytoplasm. The protein localises to the nucleus. Non-catalytic component of the proteasome, a multicatalytic proteinase complex which is characterized by its ability to cleave peptides with Arg, Phe, Tyr, Leu, and Glu adjacent to the leaving group at neutral or slightly basic pH. The proteasome has an ATP-dependent proteolytic activity. This Cryptococcus neoformans var. neoformans serotype D (strain B-3501A) (Filobasidiella neoformans) protein is Probable proteasome subunit beta type-4 (CPR1).